A 248-amino-acid polypeptide reads, in one-letter code: 21S rRNA pseudouridine(2819) synthase (248 aa).

Aspartate 58 is an active-site residue.

Belongs to the pseudouridine synthase RluA family.

It localises to the mitochondrion. It carries out the reaction uridine(2819) in 21S rRNA = pseudouridine(2819) in 21S rRNA. Its function is as follows. Pseudouridylate synthase responsible for the pseudouridine-2819 formation in mitochondrial 21S rRNA. May modulate the efficiency or the fidelity of the mitochondrial translation machinery. The protein is 21S rRNA pseudouridine(2819) synthase (PUS5) of Candida albicans (strain SC5314 / ATCC MYA-2876) (Yeast).